Reading from the N-terminus, the 303-residue chain is Albumin b-32 (303 aa).

Positions 112–137 (ATPTSSATTPGGSASAAGTRTSSATR) are enriched in low complexity. A disordered region spans residues 112 to 175 (ATPTSSATTP…GGGGADADAD (64 aa)). Residues 146-156 (ARDDQGRQRPG) are compositionally biased toward basic and acidic residues.

This sequence belongs to the ribosome-inactivating protein family. Type 1 RIP subfamily. Monomer. Endosperm.

It localises to the cytoplasm. The enzyme catalyses Endohydrolysis of the N-glycosidic bond at one specific adenosine on the 28S rRNA.. A possible regulatory factor for the synthesis of zeins, the major group of storage proteins. In Zea mays (Maize), this protein is Albumin b-32 (O6).